A 335-amino-acid polypeptide reads, in one-letter code: GTPase Obg (335 aa).

The region spanning 1 to 159 (MQFIDRSEIE…RKLLLELKLL (159 aa)) is the Obg domain. Positions 160–328 (AEVGIIGLPN…LLARVWQVLE (169 aa)) constitute an OBG-type G domain. Residues 166–173 (GLPNAGKS), 191–195 (FTTLV), 213–216 (DIPG), 280–283 (NKAD), and 309–311 (SAA) contribute to the GTP site. Mg(2+)-binding residues include S173 and T193.

Belongs to the TRAFAC class OBG-HflX-like GTPase superfamily. OBG GTPase family. In terms of assembly, monomer. Requires Mg(2+) as cofactor.

The protein localises to the cytoplasm. In terms of biological role, an essential GTPase which binds GTP, GDP and possibly (p)ppGpp with moderate affinity, with high nucleotide exchange rates and a fairly low GTP hydrolysis rate. Plays a role in control of the cell cycle, stress response, ribosome biogenesis and in those bacteria that undergo differentiation, in morphogenesis control. This is GTPase Obg from Gloeobacter violaceus (strain ATCC 29082 / PCC 7421).